A 505-amino-acid chain; its full sequence is 2-isopropylmalate synthase (505 aa).

One can recognise a Pyruvate carboxyltransferase domain in the interval 5-267; the sequence is VYIFDTTLRD…YTNIKTEEIY (263 aa). Positions 14, 202, 204, and 238 each coordinate Mn(2+). The segment at 391–505 is regulatory domain; sequence TLEYLHISSG…VNKLIWDSQK (115 aa).

This sequence belongs to the alpha-IPM synthase/homocitrate synthase family. LeuA type 1 subfamily. Homodimer. The cofactor is Mn(2+).

It localises to the cytoplasm. It carries out the reaction 3-methyl-2-oxobutanoate + acetyl-CoA + H2O = (2S)-2-isopropylmalate + CoA + H(+). The protein operates within amino-acid biosynthesis; L-leucine biosynthesis; L-leucine from 3-methyl-2-oxobutanoate: step 1/4. In terms of biological role, catalyzes the condensation of the acetyl group of acetyl-CoA with 3-methyl-2-oxobutanoate (2-ketoisovalerate) to form 3-carboxy-3-hydroxy-4-methylpentanoate (2-isopropylmalate). The polypeptide is 2-isopropylmalate synthase (Pelotomaculum thermopropionicum (strain DSM 13744 / JCM 10971 / SI)).